The following is a 270-amino-acid chain: Phosphonoacetaldehyde hydrolase (270 aa).

D11 serves as the catalytic Nucleophile. Residues D11 and A13 each contribute to the Mg(2+) site. The active-site Schiff-base intermediate with substrate is the K53. Residue D187 participates in Mg(2+) binding.

The protein belongs to the HAD-like hydrolase superfamily. PhnX family. Homodimer. Mg(2+) is required as a cofactor.

It catalyses the reaction phosphonoacetaldehyde + H2O = acetaldehyde + phosphate + H(+). In terms of biological role, involved in phosphonate degradation. The chain is Phosphonoacetaldehyde hydrolase from Salmonella choleraesuis (strain SC-B67).